The sequence spans 570 residues: MFS-type transporter pigP (570 aa).

The interval 14 to 54 (GMIKKAHPEQTPPDVSHEGDVATEKGDSDGVEQAAPTGPTD) is disordered. The span at 28–41 (VSHEGDVATEKGDS) shows a compositional bias: basic and acidic residues. A run of 7 helical transmembrane segments spans residues 65–85 (VMIMSGITLVCFLMLLDTSII), 99–119 (LPDVGWYGSAYLLASASLVPL), 131–151 (WSFVSFFAVFELGSLLCGVAT), 162–182 (VAGMGGSGIQNGAFTIIAGCV), 192–212 (GLLMGFAQLGIVIGPLIGGAF), 221–241 (CFYINLPIGAVVGLLLFFVHI), and 263–283 (LVGFVLFAPAAVQFLLALQYG). N290 carries an N-linked (GlcNAc...) asparagine glycan. 7 helical membrane passes run 293 to 313 (VVIGLFCGAGATFVCFILWEW), 336 to 356 (VVYGFLMATLLVASYYLPIYF), 369 to 389 (VYILPSILSQSALAIISGALV), 392 to 412 (FGYYLPWSLAGGIVSSVGNGL), 425 to 445 (WIGYQILLGAGRGAGLQMPII), 455 to 475 (LIPVAMALIMFCQSFFGSTFL), and 533 to 553 (VFYLAVGAAVATFVFSCGMGW).

Belongs to the major facilitator superfamily. TCR/Tet family.

The protein localises to the cell membrane. Its function is as follows. MFS-type transporter; part of the gene cluster that mediates the biosynthesis of azaphilone pigments (MonAzPs), very widely used as food colorant. The protein is MFS-type transporter pigP of Monascus ruber (Mold).